A 298-amino-acid polypeptide reads, in one-letter code: 1D-myo-inositol 2-acetamido-2-deoxy-alpha-D-glucopyranoside deacetylase (298 aa).

Zn(2+) contacts are provided by H14, D17, and H148. A disordered region spans residues 277-298 (RGPAGPDGREHDLFAGLDGPAT).

The protein belongs to the MshB deacetylase family. Zn(2+) is required as a cofactor.

The enzyme catalyses 1D-myo-inositol 2-acetamido-2-deoxy-alpha-D-glucopyranoside + H2O = 1D-myo-inositol 2-amino-2-deoxy-alpha-D-glucopyranoside + acetate. Catalyzes the deacetylation of 1D-myo-inositol 2-acetamido-2-deoxy-alpha-D-glucopyranoside (GlcNAc-Ins) in the mycothiol biosynthesis pathway. This is 1D-myo-inositol 2-acetamido-2-deoxy-alpha-D-glucopyranoside deacetylase from Nocardia farcinica (strain IFM 10152).